The following is a 166-amino-acid chain: Probable RNA-binding protein EIF1AD (166 aa).

The region spanning 5–89 is the S1-like domain; that stretch reads TKRKHVVKEV…VKAEISFVLC (85 aa). Residues 6-12 carry the Nuclear localization signal motif; sequence KRKHVVK. The residue at position 33 (Thr33) is a Phosphothreonine. A Nuclear localization signal motif is present at residues 56–65; sequence KYRKNIWIKR. A disordered region spans residues 114–166; the sequence is NNNRNRQTQPELPAEPQLSGEESSSEDDSDLFVNTNRRQYRESEEESEEEEAA. Ser132, Ser136, Ser137, Ser138, Ser156, and Ser160 each carry phosphoserine. Positions 156–166 are enriched in acidic residues; sequence SEEESEEEEAA.

It belongs to the EIF1AD family. As to quaternary structure, interacts with GAPDH and STAT1.

The protein resides in the nucleus. Plays a role into cellular response to oxidative stress. Decreases cell proliferation. This Pongo abelii (Sumatran orangutan) protein is Probable RNA-binding protein EIF1AD (EIF1AD).